Reading from the N-terminus, the 190-residue chain is Elongation factor P 2 (190 aa).

This sequence belongs to the elongation factor P family.

It is found in the cytoplasm. It functions in the pathway protein biosynthesis; polypeptide chain elongation. Its function is as follows. Involved in peptide bond synthesis. Stimulates efficient translation and peptide-bond synthesis on native or reconstituted 70S ribosomes in vitro. Probably functions indirectly by altering the affinity of the ribosome for aminoacyl-tRNA, thus increasing their reactivity as acceptors for peptidyl transferase. The chain is Elongation factor P 2 (efp2) from Chlamydia muridarum (strain MoPn / Nigg).